The following is an 84-amino-acid chain: Cell division topological specificity factor (84 aa).

It belongs to the MinE family.

Prevents the cell division inhibition by proteins MinC and MinD at internal division sites while permitting inhibition at polar sites. This ensures cell division at the proper site by restricting the formation of a division septum at the midpoint of the long axis of the cell. The protein is Cell division topological specificity factor of Burkholderia cenocepacia (strain ATCC BAA-245 / DSM 16553 / LMG 16656 / NCTC 13227 / J2315 / CF5610) (Burkholderia cepacia (strain J2315)).